We begin with the raw amino-acid sequence, 571 residues long: Proline--tRNA ligase (571 aa).

This sequence belongs to the class-II aminoacyl-tRNA synthetase family. ProS type 1 subfamily. In terms of assembly, homodimer.

The protein resides in the cytoplasm. The enzyme catalyses tRNA(Pro) + L-proline + ATP = L-prolyl-tRNA(Pro) + AMP + diphosphate. Its function is as follows. Catalyzes the attachment of proline to tRNA(Pro) in a two-step reaction: proline is first activated by ATP to form Pro-AMP and then transferred to the acceptor end of tRNA(Pro). As ProRS can inadvertently accommodate and process non-cognate amino acids such as alanine and cysteine, to avoid such errors it has two additional distinct editing activities against alanine. One activity is designated as 'pretransfer' editing and involves the tRNA(Pro)-independent hydrolysis of activated Ala-AMP. The other activity is designated 'posttransfer' editing and involves deacylation of mischarged Ala-tRNA(Pro). The misacylated Cys-tRNA(Pro) is not edited by ProRS. This Pseudomonas putida (strain ATCC 700007 / DSM 6899 / JCM 31910 / BCRC 17059 / LMG 24140 / F1) protein is Proline--tRNA ligase.